A 236-amino-acid polypeptide reads, in one-letter code: Uridylate kinase (236 aa).

10–13 (KLSG) contacts ATP. Residue Gly-52 participates in UMP binding. The ATP site is built by Gly-53 and Arg-57. Residues Asp-72 and 133 to 140 (TGNPFFTT) each bind UMP. ATP contacts are provided by Thr-160, Tyr-166, and Asp-169.

It belongs to the UMP kinase family. As to quaternary structure, homohexamer.

It localises to the cytoplasm. The catalysed reaction is UMP + ATP = UDP + ADP. Its pathway is pyrimidine metabolism; CTP biosynthesis via de novo pathway; UDP from UMP (UMPK route): step 1/1. Inhibited by UTP. Catalyzes the reversible phosphorylation of UMP to UDP. The sequence is that of Uridylate kinase from Parabacteroides distasonis (strain ATCC 8503 / DSM 20701 / CIP 104284 / JCM 5825 / NCTC 11152).